An 867-amino-acid chain; its full sequence is Alanine--tRNA ligase (867 aa).

Residues H556, H560, C658, and H662 each contribute to the Zn(2+) site.

Belongs to the class-II aminoacyl-tRNA synthetase family. The cofactor is Zn(2+).

The protein resides in the cytoplasm. It carries out the reaction tRNA(Ala) + L-alanine + ATP = L-alanyl-tRNA(Ala) + AMP + diphosphate. Catalyzes the attachment of alanine to tRNA(Ala) in a two-step reaction: alanine is first activated by ATP to form Ala-AMP and then transferred to the acceptor end of tRNA(Ala). Also edits incorrectly charged Ser-tRNA(Ala) and Gly-tRNA(Ala) via its editing domain. In Fusobacterium nucleatum subsp. nucleatum (strain ATCC 25586 / DSM 15643 / BCRC 10681 / CIP 101130 / JCM 8532 / KCTC 2640 / LMG 13131 / VPI 4355), this protein is Alanine--tRNA ligase.